The following is a 465-amino-acid chain: UDP-N-acetylmuramate--L-alanine ligase (465 aa).

Residue G112 to T118 coordinates ATP.

The protein belongs to the MurCDEF family.

The protein localises to the cytoplasm. It carries out the reaction UDP-N-acetyl-alpha-D-muramate + L-alanine + ATP = UDP-N-acetyl-alpha-D-muramoyl-L-alanine + ADP + phosphate + H(+). It participates in cell wall biogenesis; peptidoglycan biosynthesis. Cell wall formation. The sequence is that of UDP-N-acetylmuramate--L-alanine ligase from Burkholderia orbicola (strain MC0-3).